Here is a 395-residue protein sequence, read N- to C-terminus: Non-homologous end joining protein Ku (395 aa).

The Ku domain occupies 9 to 181 (ISFGLVSIPI…PPEDAAPDGD (173 aa)). The segment at 252 to 395 (RAARTSRDDE…SASSRKRTSA (144 aa)) is disordered. Polar residues-rich tracts occupy residues 283–292 (SSKTSGQSSG) and 311–320 (GKTVTRSGDS). The segment covering 351-361 (TARKTTAKKTT) has biased composition (basic residues). The segment covering 362–371 (AKGTTGTTAA) has biased composition (low complexity).

Belongs to the prokaryotic Ku family. In terms of assembly, homodimer. Interacts with LigD.

Functionally, with LigD forms a non-homologous end joining (NHEJ) DNA repair enzyme, which repairs dsDNA breaks with reduced fidelity. Binds linear dsDNA with 5'- and 3'- overhangs but not closed circular dsDNA nor ssDNA. Recruits and stimulates the ligase activity of LigD. This Streptomyces griseus subsp. griseus (strain JCM 4626 / CBS 651.72 / NBRC 13350 / KCC S-0626 / ISP 5235) protein is Non-homologous end joining protein Ku.